We begin with the raw amino-acid sequence, 352 residues long: Leukotriene B4 receptor 1 (352 aa).

Topologically, residues 1–19 (MNTTSSAAPPSLGVEFISL) are extracellular. N2 carries N-linked (GlcNAc...) asparagine glycosylation. A helical membrane pass occupies residues 20–42 (LAIILLSVALAVGLPGNSFVVWS). Residues 43 to 54 (ILKRMQKRSVTA) are Cytoplasmic-facing. The chain crosses the membrane as a helical span at residues 55–75 (LMVLNLALADLAVLLTAPFFL). Topologically, residues 76–91 (HFLAQGTWSFGLAGCR) are extracellular. A helical transmembrane segment spans residues 92 to 113 (LCHYVCGVSMYASVLLITAMSL). At 114-138 (DRSLAVARPFVSQKLRTKAMARRVL) the chain is on the cytoplasmic side. Residues 139-159 (AGIWVLSFLLATPVLAYRTVV) form a helical membrane-spanning segment. At 160 to 178 (PWKTNMSLCFPRYPSEGHR) the chain is on the extracellular side. N164 carries an N-linked (GlcNAc...) asparagine glycan. The helical transmembrane segment at 179–199 (AFHLIFEAVTGFLLPFLAVVA) threads the bilayer. Residues 200-221 (SYSDIGRRLQARRFRRSRRTGR) lie on the Cytoplasmic side of the membrane. Residues 222-242 (LVVLIILTFAAFWLPYHVVNL) traverse the membrane as a helical segment. The Extracellular segment spans residues 243–268 (AEAGRALAGQAAGLGLVGKRLSLARN). The chain crosses the membrane as a helical span at residues 269-289 (VLIALAFLSSSVNPVLYACAG). Residues 290 to 352 (GGLLRSAGVG…SSPLKLNELN (63 aa)) lie on the Cytoplasmic side of the membrane. Composition is skewed to polar residues over residues 310–326 (SEASSTRRGGSLGQTAR) and 338–352 (ESLTASSPLKLNELN). The interval 310–352 (SEASSTRRGGSLGQTARSGPAALEPGPSESLTASSPLKLNELN) is disordered.

This sequence belongs to the G-protein coupled receptor 1 family. In terms of processing, phosphorylated by GRK6 upon leukotriene B4 binding; which promotes desensitization. In terms of tissue distribution, expressed at highest levels in heart, skeletal muscle and at lower levels in brain and liver. High level of expression in lymphoid tissues.

Its subcellular location is the cell membrane. Its function is as follows. Receptor for extracellular ATP &gt; UTP and ADP. The activity of this receptor is mediated by G proteins which activate a phosphatidylinositol-calcium second messenger system. May be the cardiac P2Y receptor involved in the regulation of cardiac muscle contraction through modulation of L-type calcium currents. Is a receptor for leukotriene B4, a potent chemoattractant involved in inflammation and immune response. The chain is Leukotriene B4 receptor 1 (LTB4R) from Homo sapiens (Human).